Consider the following 152-residue polypeptide: Ribosome maturation factor RimP (152 aa).

The protein belongs to the RimP family.

It localises to the cytoplasm. In terms of biological role, required for maturation of 30S ribosomal subunits. This Sodalis glossinidius (strain morsitans) protein is Ribosome maturation factor RimP.